The primary structure comprises 176 residues: Peptide methionine sulfoxide reductase MsrA (176 aa).

The active site involves Cys-12.

Belongs to the MsrA Met sulfoxide reductase family.

The enzyme catalyses L-methionyl-[protein] + [thioredoxin]-disulfide + H2O = L-methionyl-(S)-S-oxide-[protein] + [thioredoxin]-dithiol. The catalysed reaction is [thioredoxin]-disulfide + L-methionine + H2O = L-methionine (S)-S-oxide + [thioredoxin]-dithiol. In terms of biological role, has an important function as a repair enzyme for proteins that have been inactivated by oxidation. Catalyzes the reversible oxidation-reduction of methionine sulfoxide in proteins to methionine. This is Peptide methionine sulfoxide reductase MsrA from Thermus thermophilus (strain ATCC 27634 / DSM 579 / HB8).